We begin with the raw amino-acid sequence, 94 residues long: Acylphosphatase (94 aa).

The region spanning 5–94 is the Acylphosphatase-like domain; the sequence is RLTAFVHGHV…PRDVEGFVER (90 aa). Active-site residues include Arg-20 and Asn-38.

The protein belongs to the acylphosphatase family.

The catalysed reaction is an acyl phosphate + H2O = a carboxylate + phosphate + H(+). This Corynebacterium glutamicum (strain ATCC 13032 / DSM 20300 / JCM 1318 / BCRC 11384 / CCUG 27702 / LMG 3730 / NBRC 12168 / NCIMB 10025 / NRRL B-2784 / 534) protein is Acylphosphatase (acyP).